Here is a 61-residue protein sequence, read N- to C-terminus: Lens epithelial cell protein LEP503 (61 aa).

In terms of tissue distribution, restricted to lens epithelial cells.

Functionally, may play a role in lens epithelial cell differentiation. This Homo sapiens (Human) protein is Lens epithelial cell protein LEP503 (LENEP).